Here is a 1011-residue protein sequence, read N- to C-terminus: E3 ubiquitin-protein ligase mib1 (1011 aa).

The region spanning 6–74 (NNRVMVEGVG…AYDLRIMDSA (69 aa)) is the MIB/HERC2 1 domain. The ZZ-type zinc-finger motif lies at 80–132 (HDGTMCDTCRQQPIIGIRWKCAECTNYDLCTVCYHGDKHHLRHRFYRITTPGS). Residues C85, C88, C100, C103, C109, C112, H118, and H122 each contribute to the Zn(2+) site. In terms of domain architecture, MIB/HERC2 2 spans 143–221 (SKKITARGIF…MSDLKCVQDA (79 aa)). ANK repeat units follow at residues 430 to 460 (DLNE…DVNG), 463 to 492 (AGHT…DVEA), 496 to 525 (DGDR…DLNA), 529 to 558 (RRQT…HPSL), 562 to 591 (EGDT…DVTI), 595 to 627 (NGFN…IVDE), 631 to 661 (DGYT…NLDI), 665 to 694 (NQQT…KLDI), and 698 to 729 (DGDT…KVDT). 2 RING-type zinc fingers span residues 820-855 (CMVC…LLCK) and 867-902 (CVVC…VQCR). Residues 936 to 963 (QKDKDNTNVNADVQKLQQQLQDIKEQTM) are a coiled coil. An RING-type 3 zinc finger spans residues 964–997 (CPVCLDRLKNMIFMCGHGTCQLCGDRMSECPICR).

The protein resides in the cytoplasm. It is found in the cytoskeleton. It localises to the microtubule organizing center. Its subcellular location is the centrosome. The protein localises to the centriolar satellite. The catalysed reaction is S-ubiquitinyl-[E2 ubiquitin-conjugating enzyme]-L-cysteine + [acceptor protein]-L-lysine = [E2 ubiquitin-conjugating enzyme]-L-cysteine + N(6)-ubiquitinyl-[acceptor protein]-L-lysine.. It functions in the pathway protein modification; protein ubiquitination. In terms of biological role, E3 ubiquitin-protein ligase that mediates ubiquitination of Delta receptors, which act as ligands of Notch proteins. Positively regulates the Delta-mediated Notch signaling by ubiquitinating the intracellular domain of Delta, leading to endocytosis of Delta receptors. This Xenopus laevis (African clawed frog) protein is E3 ubiquitin-protein ligase mib1 (mib1).